Consider the following 554-residue polypeptide: Chaperonin GroEL (554 aa).

ATP is bound by residues 30 to 33 (TLGP), K51, 87 to 91 (DGTTT), G415, 479 to 481 (NAA), and D495.

It belongs to the chaperonin (HSP60) family. Forms a cylinder of 14 subunits composed of two heptameric rings stacked back-to-back. Interacts with the co-chaperonin GroES.

The protein resides in the cytoplasm. It catalyses the reaction ATP + H2O + a folded polypeptide = ADP + phosphate + an unfolded polypeptide.. In terms of biological role, together with its co-chaperonin GroES, plays an essential role in assisting protein folding. The GroEL-GroES system forms a nano-cage that allows encapsulation of the non-native substrate proteins and provides a physical environment optimized to promote and accelerate protein folding. This chain is Chaperonin GroEL, found in Nitrosococcus oceani (strain ATCC 19707 / BCRC 17464 / JCM 30415 / NCIMB 11848 / C-107).